The primary structure comprises 174 residues: MTQPLFLIGPRGCGKTTVGMALADSLNRRFVDTDQWLQSQLNMTVAEIVEREEWTGFRARETAALEAVTAPSTVIATGGGIILTEFNRHFMQNNGIVVYLCAPVSVLVNRLQAAPEEDLRPTLTGKPLSEEVQEVLEERDALYREVAHIIIDATNEPSQVISEIRSALAQTINC.

An ATP-binding site is contributed by 12–17; the sequence is GCGKTT. Positions 16 and 32 each coordinate Mg(2+). Residues Asp34, Arg58, and Gly79 each contribute to the substrate site. The interval 112 to 126 is LID domain; the sequence is QAAPEEDLRPTLTGK. ATP is bound at residue Arg120. Arg139 provides a ligand contact to substrate.

This sequence belongs to the shikimate kinase family. AroL subfamily. As to quaternary structure, monomer. Requires Mg(2+) as cofactor.

Its subcellular location is the cytoplasm. It catalyses the reaction shikimate + ATP = 3-phosphoshikimate + ADP + H(+). It participates in metabolic intermediate biosynthesis; chorismate biosynthesis; chorismate from D-erythrose 4-phosphate and phosphoenolpyruvate: step 5/7. In terms of biological role, catalyzes the specific phosphorylation of the 3-hydroxyl group of shikimic acid using ATP as a cosubstrate. This chain is Shikimate kinase 2, found in Escherichia coli O7:K1 (strain IAI39 / ExPEC).